The sequence spans 1116 residues: Error-prone DNA polymerase 1 (1116 aa).

It belongs to the DNA polymerase type-C family. DnaE2 subfamily.

It localises to the cytoplasm. The catalysed reaction is DNA(n) + a 2'-deoxyribonucleoside 5'-triphosphate = DNA(n+1) + diphosphate. DNA polymerase involved in damage-induced mutagenesis and translesion synthesis (TLS). It is not the major replicative DNA polymerase. The polypeptide is Error-prone DNA polymerase 1 (Rhizobium meliloti (strain 1021) (Ensifer meliloti)).